The following is a 173-amino-acid chain: Disulfide bond formation protein B (173 aa).

The Cytoplasmic portion of the chain corresponds to 1–16 (MRILSSLKTFSQSRLS). The chain crosses the membrane as a helical span at residues 17 to 33 (WLLLLAFVVFFTLCAMY). Residues 34–51 (FQHVMLLAPCVMCIYERI) lie on the Periplasmic side of the membrane. C43 and C46 are oxidised to a cystine. Residues 52 to 67 (AMLGIGVAALIGAIAP) form a helical membrane-spanning segment. Topologically, residues 68–74 (QNPVVRW) are cytoplasmic. Residues 75–92 (LGFAAWGASSYKGLMLAI) form a helical membrane-spanning segment. The Periplasmic portion of the chain corresponds to 93–147 (EHVNYQFNPSPFATCDLFVTFPAWAPLNQWAPNLFEAYGDCSKVVWQFLTLSMPQ). Residues C107 and C133 are joined by a disulfide bond. The chain crosses the membrane as a helical span at residues 148–166 (WLVVIFAANLLALAIFVVA). Residues 167-173 (QLAKTSR) are Cytoplasmic-facing.

This sequence belongs to the DsbB family.

It is found in the cell inner membrane. In terms of biological role, required for disulfide bond formation in some periplasmic proteins. Acts by oxidizing the DsbA protein. The polypeptide is Disulfide bond formation protein B (Vibrio cholerae serotype O1 (strain ATCC 39315 / El Tor Inaba N16961)).